The primary structure comprises 571 residues: Potassium-transporting ATPase potassium-binding subunit (571 aa).

The next 12 helical transmembrane spans lie at 5–25 (GWMQ…PLGG), 64–84 (LAYA…LYAL), 136–156 (GLTH…VALI), 179–199 (LYVL…QGMP), 220–240 (VGPV…GGFF), 254–274 (LSNF…TNVF), 285–305 (WAIL…TYWA), 330–350 (FGIA…CGAV), 375–395 (IIGG…VAIF), 421–441 (MLGI…ATVV), 488–508 (LAIG…AIAG), and 527–547 (GGLF…LTFF).

Belongs to the KdpA family. In terms of assembly, the system is composed of three essential subunits: KdpA, KdpB and KdpC.

It is found in the cell inner membrane. Its function is as follows. Part of the high-affinity ATP-driven potassium transport (or Kdp) system, which catalyzes the hydrolysis of ATP coupled with the electrogenic transport of potassium into the cytoplasm. This subunit binds the periplasmic potassium ions and delivers the ions to the membrane domain of KdpB through an intramembrane tunnel. This Methylorubrum extorquens (strain PA1) (Methylobacterium extorquens) protein is Potassium-transporting ATPase potassium-binding subunit.